A 1343-amino-acid polypeptide reads, in one-letter code: DNA-directed RNA polymerase subunit beta (1343 aa).

The protein belongs to the RNA polymerase beta chain family. In terms of assembly, the RNAP catalytic core consists of 2 alpha, 1 beta, 1 beta' and 1 omega subunit. When a sigma factor is associated with the core the holoenzyme is formed, which can initiate transcription.

It carries out the reaction RNA(n) + a ribonucleoside 5'-triphosphate = RNA(n+1) + diphosphate. DNA-dependent RNA polymerase catalyzes the transcription of DNA into RNA using the four ribonucleoside triphosphates as substrates. In Shewanella baltica (strain OS223), this protein is DNA-directed RNA polymerase subunit beta.